Reading from the N-terminus, the 100-residue chain is C-X-C motif chemokine 3 (100 aa).

The signal sequence occupies residues 1–31; sequence MAPPTCRLLSAALVLLLLLATNHQATGAVVA. 2 cysteine pairs are disulfide-bonded: Cys36–Cys62 and Cys38–Cys78.

This sequence belongs to the intercrine alpha (chemokine CxC) family.

The protein resides in the secreted. Ligand for CXCR2. Has chemotactic activity for neutrophils. May play a role in inflammation and exert its effects on endothelial cells in an autocrine fashion. The chain is C-X-C motif chemokine 3 from Mus musculus (Mouse).